The primary structure comprises 913 residues: DNA polymerase (913 aa).

Residues 182–401 (PLIIASWDIE…AYARKDTDLP (220 aa)) are contains conserved residues essential for 3' -&gt; 5' exonuclease activities.

This sequence belongs to the DNA polymerase type-B family.

The catalysed reaction is DNA(n) + a 2'-deoxyribonucleoside 5'-triphosphate = DNA(n+1) + diphosphate. In addition to polymerase activity, this DNA polymerase potentially exhibits 3' to 5' exonuclease activity. This is DNA polymerase (DPO) from Chlorella (PBCV-NY2A).